The chain runs to 291 residues: MQENLLEKQFLNHPLYTKIQELKALNLACNFSLDDSVNLSTNSQAKDEILAITKELKPWRKGPFKIDDLFIDTEWQSFIKFNILKPFMNEISQKCVADIGCNNGYYMFKMLEFNPAKLIGFDPSIKYRLQFELINALAKTPIEYELLGVEDLPRYGLKFDVIFCLGVIYHRSDPIKMLKDLKAGLNKNGVVFLDTMYIEDEREIALVPNKTYSKIPNIYFVPSISALKNWCERAGFKEFEVLATKKTDENEQRKTEWIDSFSLENFLDPKDKNLTIEGYEAPKRVYVRIGI.

Residues lysine 61, tryptophan 75, lysine 80, glycine 100, aspartate 122–serine 124, valine 149–glutamate 150, tyrosine 169, and arginine 284 each bind carboxy-S-adenosyl-L-methionine.

Belongs to the class I-like SAM-binding methyltransferase superfamily. CmoB family. In terms of assembly, homotetramer.

The catalysed reaction is carboxy-S-adenosyl-L-methionine + 5-hydroxyuridine(34) in tRNA = 5-carboxymethoxyuridine(34) in tRNA + S-adenosyl-L-homocysteine + H(+). Catalyzes carboxymethyl transfer from carboxy-S-adenosyl-L-methionine (Cx-SAM) to 5-hydroxyuridine (ho5U) to form 5-carboxymethoxyuridine (cmo5U) at position 34 in tRNAs. The sequence is that of tRNA U34 carboxymethyltransferase from Campylobacter jejuni subsp. jejuni serotype O:6 (strain 81116 / NCTC 11828).